Reading from the N-terminus, the 77-residue chain is U14-theraphotoxin-Cg1a 2 (77 aa).

A signal peptide spans 1–21 (MKTSVLLVILGIAAITVQCTA). Positions 22 to 49 (SESVKQDSLRTFVDAVLGWNAEMASEAR) are excised as a propeptide. Disulfide bonds link C50/C64, C57/C69, and C63/C75. Position 77 is a lysine amide (K77).

Belongs to the neurotoxin 10 (Hwtx-1) family. 65 (Jztx-21) subfamily. As to expression, expressed by the venom gland.

It localises to the secreted. Probable ion channel inhibitor. This chain is U14-theraphotoxin-Cg1a 2, found in Chilobrachys guangxiensis (Chinese earth tiger tarantula).